Here is a 513-residue protein sequence, read N- to C-terminus: ATP synthase subunit alpha (513 aa).

Gly-169–Thr-176 serves as a coordination point for ATP.

The protein belongs to the ATPase alpha/beta chains family. In terms of assembly, F-type ATPases have 2 components, CF(1) - the catalytic core - and CF(0) - the membrane proton channel. CF(1) has five subunits: alpha(3), beta(3), gamma(1), delta(1), epsilon(1). CF(0) has three main subunits: a(1), b(2) and c(9-12). The alpha and beta chains form an alternating ring which encloses part of the gamma chain. CF(1) is attached to CF(0) by a central stalk formed by the gamma and epsilon chains, while a peripheral stalk is formed by the delta and b chains.

It localises to the cell inner membrane. It catalyses the reaction ATP + H2O + 4 H(+)(in) = ADP + phosphate + 5 H(+)(out). Functionally, produces ATP from ADP in the presence of a proton gradient across the membrane. The alpha chain is a regulatory subunit. The sequence is that of ATP synthase subunit alpha from Haemophilus influenzae (strain PittEE).